The primary structure comprises 476 residues: Xylan O-acetyltransferase 4 (476 aa).

Residues 1–37 (MTKPQQQSPPSTTATTTTSPPPPPPSTPPPASSSSSS) form a disordered region. At 1-63 (MTKPQQQSPP…SLLSALRRSP (63 aa)) the chain is on the cytoplasmic side. Low complexity predominate over residues 8–18 (SPPSTTATTTT). Residues 19 to 31 (SPPPPPPSTPPPA) show a composition bias toward pro residues. Residues 64 to 80 (VTTLVAAFFLLALFMYG) traverse the membrane as a helical; Signal-anchor for type II membrane protein segment. The Lumenal segment spans residues 81–476 (EDVRTLAELS…PSPHPPLPPQ (396 aa)). 3 N-linked (GlcNAc...) asparagine glycosylation sites follow: asparagine 103, asparagine 128, and asparagine 167. Intrachain disulfides connect cysteine 117–cysteine 168, cysteine 139–cysteine 204, cysteine 148–cysteine 444, and cysteine 360–cysteine 440. A GDS motif motif is present at residues 191–193 (GDS). The active-site Nucleophile is serine 193. N-linked (GlcNAc...) asparagine glycans are attached at residues asparagine 299 and asparagine 369. Aspartate 439 serves as the catalytic Proton donor. The DXXH motif motif lies at 439-442 (DCIH). The Proton acceptor role is filled by histidine 442.

Belongs to the PC-esterase family. TBL subfamily. In terms of tissue distribution, highly expressed in leaves. Expressed in roots, stems and inflorescences.

Its subcellular location is the golgi apparatus membrane. Functionally, xylan acetyltransferase required for 2-O- and 3-O-monoacetylation of xylosyl residues in xylan. Catalyzes the 2-O-acetylation of xylan, followed by nonenzymatic acetyl migration to the O-3 position, resulting in products that are monoacetylated at both O-2 and O-3 positions. This Oryza sativa subsp. japonica (Rice) protein is Xylan O-acetyltransferase 4.